The chain runs to 516 residues: Rho guanine nucleotide exchange factor 9 (516 aa).

Residues 8 to 67 (DSIVSAEAVWDHVTMANRELAFKAGDVIKVLDASNKDWWWGQIDDEEGWFPASFVRLWVN) form the SH3 domain. Residues 100–110 (RDQMRANVINE) are interaction with GPHN. The 185-residue stretch at 103-287 (MRANVINEIM…RNVTQQINER (185 aa)) folds into the DH domain. The region spanning 318-425 (ELIYTGEMAW…WLRAFREERK (108 aa)) is the PH domain. The interval 450-480 (RKASKQKGVNSARSVPPSYPPPQDPLNQGQY) is disordered. Ser502 is subject to Phosphoserine.

Interacts with GPHN. In terms of tissue distribution, detected in embryonic and adult brain.

Its subcellular location is the cytoplasm. The protein localises to the postsynaptic density. Functionally, acts as a guanine nucleotide exchange factor (GEF) for CDC42. Promotes formation of GPHN clusters. The sequence is that of Rho guanine nucleotide exchange factor 9 (Arhgef9) from Mus musculus (Mouse).